A 273-amino-acid polypeptide reads, in one-letter code: Phosphate import ATP-binding protein PstB (273 aa).

One can recognise an ABC transporter domain in the interval 18-257; the sequence is ISLQNVTISY…EFDKTKKIFN (240 aa). 50–57 is an ATP binding site; it reads GPSGCGKS.

The protein belongs to the ABC transporter superfamily. Phosphate importer (TC 3.A.1.7) family. In terms of assembly, the complex is composed of two ATP-binding proteins (PstB), two transmembrane proteins (PstC and PstA) and a solute-binding protein (PstS).

Its subcellular location is the cell inner membrane. It catalyses the reaction phosphate(out) + ATP + H2O = ADP + 2 phosphate(in) + H(+). Functionally, part of the ABC transporter complex PstSACB involved in phosphate import. Responsible for energy coupling to the transport system. This chain is Phosphate import ATP-binding protein PstB, found in Prochlorococcus marinus (strain SARG / CCMP1375 / SS120).